Reading from the N-terminus, the 256-residue chain is Ribonuclease 3-like protein 1 (256 aa).

Residues 22 to 168 enclose the RNase III domain; it reads AEVERALGGY…IVGAVYLDSK (147 aa). Mg(2+)-binding residues include glutamate 65, aspartate 154, and glutamate 157.

Mg(2+) is required as a cofactor. Mn(2+) serves as cofactor.

Cleaves double-stranded RNA (dsRNA). The sequence is that of Ribonuclease 3-like protein 1 from Oryza sativa subsp. japonica (Rice).